Here is a 218-residue protein sequence, read N- to C-terminus: Deoxyribose-phosphate aldolase (218 aa).

Asp-89 serves as the catalytic Proton donor/acceptor. The Schiff-base intermediate with acetaldehyde role is filled by Lys-152. Lys-182 functions as the Proton donor/acceptor in the catalytic mechanism.

This sequence belongs to the DeoC/FbaB aldolase family. DeoC type 1 subfamily.

It is found in the cytoplasm. It catalyses the reaction 2-deoxy-D-ribose 5-phosphate = D-glyceraldehyde 3-phosphate + acetaldehyde. Its pathway is carbohydrate degradation; 2-deoxy-D-ribose 1-phosphate degradation; D-glyceraldehyde 3-phosphate and acetaldehyde from 2-deoxy-alpha-D-ribose 1-phosphate: step 2/2. In terms of biological role, catalyzes a reversible aldol reaction between acetaldehyde and D-glyceraldehyde 3-phosphate to generate 2-deoxy-D-ribose 5-phosphate. This Corynebacterium diphtheriae (strain ATCC 700971 / NCTC 13129 / Biotype gravis) protein is Deoxyribose-phosphate aldolase.